A 43-amino-acid chain; its full sequence is Potassium channel toxin gamma-KTx 4.2 (43 aa).

Intrachain disulfides connect Cys5–Cys23, Cys11–Cys34, Cys20–Cys39, and Cys24–Cys41.

This sequence belongs to the ergtoxin family. Gamma-KTx 4 subfamily. As to expression, expressed by the venom gland.

Its subcellular location is the secreted. Reversibly blocks Kv11/ERG potassium channels. This is Potassium channel toxin gamma-KTx 4.2 from Centruroides noxius (Mexican scorpion).